A 180-amino-acid polypeptide reads, in one-letter code: Protein PHLOEM PROTEIN 2-LIKE A9 (180 aa).

The interval 1-21 is disordered; the sequence is MSSQKSSHHKADSKMEQDNNR. A compositionally biased stretch (basic and acidic residues) spans 9–21; sequence HKADSKMEQDNNR.

The polypeptide is Protein PHLOEM PROTEIN 2-LIKE A9 (PP2A9) (Arabidopsis thaliana (Mouse-ear cress)).